Here is a 294-residue protein sequence, read N- to C-terminus: Cytidine deaminase (294 aa).

2 consecutive CMP/dCMP-type deaminase domains span residues 48–168 and 186–294; these read DEDA…FGPK and LTGD…VLLG. Residue 89–91 coordinates substrate; sequence NME. His-102 provides a ligand contact to Zn(2+). The Proton donor role is filled by Glu-104. 2 residues coordinate Zn(2+): Cys-129 and Cys-132.

The protein belongs to the cytidine and deoxycytidylate deaminase family. As to quaternary structure, homodimer. Requires Zn(2+) as cofactor.

The enzyme catalyses cytidine + H2O + H(+) = uridine + NH4(+). It catalyses the reaction 2'-deoxycytidine + H2O + H(+) = 2'-deoxyuridine + NH4(+). This enzyme scavenges exogenous and endogenous cytidine and 2'-deoxycytidine for UMP synthesis. The polypeptide is Cytidine deaminase (Salmonella enteritidis PT4 (strain P125109)).